A 515-amino-acid chain; its full sequence is Sterol 14-alpha demethylase cyp51A (515 aa).

The chain crosses the membrane as a helical span at residues 7–29; that stretch reads LTAYMAVAVLTAILLNVVYQLFF. Residues N33 and N269 are each glycosylated (N-linked (GlcNAc...) asparagine). Heme is bound at residue C454. N512 carries N-linked (GlcNAc...) asparagine glycosylation.

This sequence belongs to the cytochrome P450 family. Heme serves as cofactor.

The protein localises to the endoplasmic reticulum membrane. It carries out the reaction a 14alpha-methyl steroid + 3 reduced [NADPH--hemoprotein reductase] + 3 O2 = a Delta(14) steroid + formate + 3 oxidized [NADPH--hemoprotein reductase] + 4 H2O + 4 H(+). It catalyses the reaction a 14alpha-methyl steroid + reduced [NADPH--hemoprotein reductase] + O2 = a 14alpha-hydroxymethyl steroid + oxidized [NADPH--hemoprotein reductase] + H2O + H(+). The catalysed reaction is a 14alpha-hydroxymethyl steroid + reduced [NADPH--hemoprotein reductase] + O2 = a 14alpha-formyl steroid + oxidized [NADPH--hemoprotein reductase] + 2 H2O + H(+). The enzyme catalyses a 14alpha-formyl steroid + reduced [NADPH--hemoprotein reductase] + O2 = a Delta(14) steroid + formate + oxidized [NADPH--hemoprotein reductase] + H2O + 2 H(+). It carries out the reaction lanosterol + 3 reduced [NADPH--hemoprotein reductase] + 3 O2 = 4,4-dimethyl-5alpha-cholesta-8,14,24-trien-3beta-ol + formate + 3 oxidized [NADPH--hemoprotein reductase] + 4 H2O + 4 H(+). It catalyses the reaction lanosterol + reduced [NADPH--hemoprotein reductase] + O2 = 32-hydroxylanosterol + oxidized [NADPH--hemoprotein reductase] + H2O + H(+). The catalysed reaction is 32-hydroxylanosterol + reduced [NADPH--hemoprotein reductase] + O2 = 32-oxolanosterol + oxidized [NADPH--hemoprotein reductase] + 2 H2O + H(+). The enzyme catalyses 32-oxolanosterol + reduced [NADPH--hemoprotein reductase] + O2 = 4,4-dimethyl-5alpha-cholesta-8,14,24-trien-3beta-ol + formate + oxidized [NADPH--hemoprotein reductase] + H2O + 2 H(+). It carries out the reaction eburicol + 3 reduced [NADPH--hemoprotein reductase] + 3 O2 = 14-demethyleburicol + formate + 3 oxidized [NADPH--hemoprotein reductase] + 4 H2O + 4 H(+). It catalyses the reaction eburicol + reduced [NADPH--hemoprotein reductase] + O2 = 32-hydroxyeburicol + oxidized [NADPH--hemoprotein reductase] + H2O + H(+). The catalysed reaction is 32-hydroxyeburicol + reduced [NADPH--hemoprotein reductase] + O2 = 32-oxoeburicol + oxidized [NADPH--hemoprotein reductase] + 2 H2O + H(+). The enzyme catalyses 32-oxoeburicol + reduced [NADPH--hemoprotein reductase] + O2 = 14-demethyleburicol + formate + oxidized [NADPH--hemoprotein reductase] + H2O + 2 H(+). The protein operates within steroid metabolism; ergosterol biosynthesis. Its activity is regulated as follows. The sterol 14-alpha demethylase activity is inhibited by azole compounds. Activity is inhibited by the novel and long-acting fungicidal azole, PC1244. Its function is as follows. Sterol 14alpha-demethylase, encoded by cyp51A and cyp51B, that plays a critical role in the third module of ergosterol biosynthesis pathway, being ergosterol the major sterol component in fungal membranes that participates in a variety of functions. The third module or late pathway involves the ergosterol synthesis itself through consecutive reactions that mainly occur in the endoplasmic reticulum (ER) membrane. In filamentous fungi, during the initial step of this module, lanosterol (lanosta-8,24-dien-3beta-ol) can be metabolized to eburicol. Sterol 14alpha-demethylase catalyzes the three-step oxidative removal of the 14alpha-methyl group (C-32) of both these sterols in the form of formate, and converts eburicol and lanosterol to 14-demethyleburicol (4,4,24-trimethylergosta-8,14,24(28)-trienol) and 4,4-dimethyl-5alpha-cholesta-8,14,24-trien-3beta-ol, respectively, which are further metabolized by other enzymes in the pathway to ergosterol. Can also use substrates not intrinsic to fungi, such as 24,25-dihydrolanosterol (DHL), producing 4,4'-dimethyl-8,14-cholestadien-3-beta-ol, but at lower rates than the endogenous substrates. As a target of azole drugs, plays a crucial role in azole susceptibility. This chain is Sterol 14-alpha demethylase cyp51A, found in Aspergillus fumigatus (strain ATCC MYA-4609 / CBS 101355 / FGSC A1100 / Af293) (Neosartorya fumigata).